Here is a 203-residue protein sequence, read N- to C-terminus: Putative 3-methyladenine DNA glycosylase (203 aa).

This sequence belongs to the DNA glycosylase MPG family.

The chain is Putative 3-methyladenine DNA glycosylase from Desulfitobacterium hafniense (strain Y51).